The primary structure comprises 443 residues: tRNA modification GTPase MnmE (443 aa).

3 residues coordinate (6S)-5-formyl-5,6,7,8-tetrahydrofolate: R23, E82, and K121. One can recognise a TrmE-type G domain in the interval 215 to 364; the sequence is GTSIVLAGHP…LKQFIQKWIQ (150 aa). Residue N225 coordinates K(+). Residues 225–230, 244–250, and 269–272 each bind GTP; these read NAGKSS, TDIPGTT, and DSAG. S229 contacts Mg(2+). Positions 244, 246, and 249 each coordinate K(+). Position 250 (T250) interacts with Mg(2+). Residue K443 coordinates (6S)-5-formyl-5,6,7,8-tetrahydrofolate.

Belongs to the TRAFAC class TrmE-Era-EngA-EngB-Septin-like GTPase superfamily. TrmE GTPase family. In terms of assembly, homodimer. Heterotetramer of two MnmE and two MnmG subunits. K(+) is required as a cofactor.

The protein resides in the cytoplasm. Functionally, exhibits a very high intrinsic GTPase hydrolysis rate. Involved in the addition of a carboxymethylaminomethyl (cmnm) group at the wobble position (U34) of certain tRNAs, forming tRNA-cmnm(5)s(2)U34. This is tRNA modification GTPase MnmE from Chlamydia felis (strain Fe/C-56) (Chlamydophila felis).